The chain runs to 74 residues: MPPQSDDKRQAAREVIDILHEISTLLNTNLDRTELSLCVSLIENGVNPDALATVIKDLRTEAGLALRASNESPE.

The protein belongs to the MOZART1 family. In terms of assembly, part of the gamma-tubulin complex.

Its subcellular location is the cytoplasm. The protein localises to the cytoskeleton. The protein resides in the microtubule organizing center. It is found in the spindle pole body. Its function is as follows. Required for gamma-tubulin complex recruitment to the microtubule organizing center (MTOC). The polypeptide is Mitotic-spindle organizing protein 1 (Emericella nidulans (strain FGSC A4 / ATCC 38163 / CBS 112.46 / NRRL 194 / M139) (Aspergillus nidulans)).